We begin with the raw amino-acid sequence, 178 residues long: MGLIMAKLFQSWWIGKKYKIIVVGLDNAGKTTILYNYVTKDQVETKPTIGSNVEEVSYRNLDFVIWDIGGQESLRKSWSTYYVQTDVVIVVIDSSDTTRIPIMKEQLHNMLQHEDLARAHILVLANKQDLPGAMNPAEVSTQLGLQTLRGARKWQINGCCAVKGEGLPEALEWIANNL.

Gly2 carries the N-myristoyl glycine lipid modification. GTP-binding positions include 24-31 (GLDNAGKT), 67-71 (DIGGQ), and 126-129 (NKQD).

This sequence belongs to the small GTPase superfamily. Arf family.

The protein localises to the golgi apparatus. Its function is as follows. GTP-binding protein that may be involved in protein trafficking; may modulate vesicle budding and uncoating within the Golgi apparatus. Plays a role in the shedding of pathogen spores from intestinal cells. In Caenorhabditis elegans, this protein is ADP-ribosylation factor-like protein 5 (arl-5).